Consider the following 107-residue polypeptide: U1-lycotoxin-Ls1b (107 aa).

The first 20 residues, 1-20 (MMKVLVVVALLVTLISYSSG), serve as a signal peptide directing secretion. A propeptide spanning residues 21–41 (EGIDDLEADELLSLMANEQTR) is cleaved from the precursor. 4 cysteine pairs are disulfide-bonded: cysteine 44/cysteine 59, cysteine 51/cysteine 68, cysteine 58/cysteine 86, and cysteine 70/cysteine 84.

This sequence belongs to the neurotoxin 19 (CSTX) family. 04 (U1-Lctx) subfamily. In terms of tissue distribution, expressed by the venom gland.

The protein resides in the secreted. This Lycosa singoriensis (Wolf spider) protein is U1-lycotoxin-Ls1b.